A 621-amino-acid chain; its full sequence is MSAVSISAVKSDFFTVEAIAVTHHRTPHPPHFPSLRFPLSLKSPPATSLNLVAGSKLLHFSRRLPSIKCSYTPSLDLSEEQFTKFKKASEKGNLVPLFRCVFSDHLTPILAYRCLVKEDDRDAPSFLFESVEPGSQSSNIGRYSVVGAQPTIEIVAKGNVVTVMDHGASLRTEEEVDDPMMVPQKIMEEWNPQGIDELPEAFCGGWVGYFSYDTVRYVEKKKLPFSNAPEDDRSLPDVNLGLYDDVIVFDHVEKKAYVIHWVRIDKDRSVEENFREGMNRLESLTSRIQDQKPPKMPTGFIKLRTQLFGPKLEKSTMTSEAYKEAVVEAKEHILAGDIFQIVLSQRFERRTFADPFEIYRALRIVNPSPYMAYLQVRGCILVASSPEILLRSKNRKITNRPLAGTVRRGKTPKEDLMLEKELLSDEKQCAEHIMLVDLGRNDVGKVSKPGSVEVKKLKDIEWFSHVMHISSTVVGELLDHLTSWDALRAVLPVGTVSGAPKVKAMELIDELEVTRRGPYSGGFGGISFNGDMDIALALRTMVFPTNTRYDTLYSYKHPQRRREWIAHIQAGAGIVADSNPDDEHRECENKAAALARAIDLAESSFLEAPEFTTITPHINNI.

Residues 1 to 87 (MSAVSISAVK…SEEQFTKFKK (87 aa)) constitute a chloroplast transit peptide.

Belongs to the anthranilate synthase component I family. In terms of assembly, heterotetramer consisting of two non-identical subunits: a beta subunit and a large alpha subunit.

Its subcellular location is the plastid. It is found in the chloroplast. It catalyses the reaction chorismate + L-glutamine = anthranilate + pyruvate + L-glutamate + H(+). Its pathway is amino-acid biosynthesis; L-tryptophan biosynthesis; L-tryptophan from chorismate: step 1/5. With respect to regulation, feedback inhibition by tryptophan. Part of a heterotetrameric complex that catalyzes the two-step biosynthesis of anthranilate, an intermediate in the biosynthesis of L-tryptophan. In the first step, the glutamine-binding beta subunit of anthranilate synthase (AS) provides the glutamine amidotransferase activity which generates ammonia as a substrate that, along with chorismate, is used in the second step, catalyzed by the large alpha subunit of AS to produce anthranilate. The polypeptide is Anthranilate synthase alpha subunit 2, chloroplastic (ASA2) (Arabidopsis thaliana (Mouse-ear cress)).